Consider the following 794-residue polypeptide: Phenylalanine--tRNA ligase beta subunit (794 aa).

One can recognise a tRNA-binding domain in the interval Ala-39–Arg-148. The B5 domain occupies Pro-399–Ser-474. Mg(2+)-binding residues include Asp-452, Asp-458, Glu-461, and Glu-462. The region spanning Ser-700–Arg-793 is the FDX-ACB domain.

It belongs to the phenylalanyl-tRNA synthetase beta subunit family. Type 1 subfamily. In terms of assembly, tetramer of two alpha and two beta subunits. Mg(2+) serves as cofactor.

The protein resides in the cytoplasm. It carries out the reaction tRNA(Phe) + L-phenylalanine + ATP = L-phenylalanyl-tRNA(Phe) + AMP + diphosphate + H(+). The protein is Phenylalanine--tRNA ligase beta subunit of Dechloromonas aromatica (strain RCB).